Consider the following 206-residue polypeptide: Holliday junction branch migration complex subunit RuvA (206 aa).

Residues 1–64 (MIAKLTGLLD…EDNIQLFGFA (64 aa)) form a domain I region. Residues 65–143 (DTEERDWFRL…SFGAPAPAAA (79 aa)) are domain II. A flexible linker region spans residues 144-154 (TAGKGGAAPAG). The segment at 154-206 (GPAGAVADAVSALVNLGYRRVEAFTAVNAVAQRLGPEAGVSDLIRAGLKELSP) is domain III.

Belongs to the RuvA family. Homotetramer. Forms an RuvA(8)-RuvB(12)-Holliday junction (HJ) complex. HJ DNA is sandwiched between 2 RuvA tetramers; dsDNA enters through RuvA and exits via RuvB. An RuvB hexamer assembles on each DNA strand where it exits the tetramer. Each RuvB hexamer is contacted by two RuvA subunits (via domain III) on 2 adjacent RuvB subunits; this complex drives branch migration. In the full resolvosome a probable DNA-RuvA(4)-RuvB(12)-RuvC(2) complex forms which resolves the HJ.

The protein localises to the cytoplasm. The RuvA-RuvB-RuvC complex processes Holliday junction (HJ) DNA during genetic recombination and DNA repair, while the RuvA-RuvB complex plays an important role in the rescue of blocked DNA replication forks via replication fork reversal (RFR). RuvA specifically binds to HJ cruciform DNA, conferring on it an open structure. The RuvB hexamer acts as an ATP-dependent pump, pulling dsDNA into and through the RuvAB complex. HJ branch migration allows RuvC to scan DNA until it finds its consensus sequence, where it cleaves and resolves the cruciform DNA. This chain is Holliday junction branch migration complex subunit RuvA, found in Rhodospirillum centenum (strain ATCC 51521 / SW).